Here is a 160-residue protein sequence, read N- to C-terminus: MRLVVIAVGRLKQGPERELADRYRGRFADIGRNLGFRGLDVHEVAESRARDAGQRIREEAAAVLALAPKEMILVALDEKGKSIDSAAFAEHLGRWRDESVADAVFMIGGADGLSPELRRRARLSVAFGAATWPHQMVRVMLLEQIYRAATILAGHPYHRG.

Positions 76 and 108 each coordinate S-adenosyl-L-methionine.

Belongs to the RNA methyltransferase RlmH family. In terms of assembly, homodimer.

Its subcellular location is the cytoplasm. It catalyses the reaction pseudouridine(1915) in 23S rRNA + S-adenosyl-L-methionine = N(3)-methylpseudouridine(1915) in 23S rRNA + S-adenosyl-L-homocysteine + H(+). Functionally, specifically methylates the pseudouridine at position 1915 (m3Psi1915) in 23S rRNA. This chain is Ribosomal RNA large subunit methyltransferase H, found in Nitrobacter winogradskyi (strain ATCC 25391 / DSM 10237 / CIP 104748 / NCIMB 11846 / Nb-255).